Here is a 494-residue protein sequence, read N- to C-terminus: DnaJ homolog subfamily C member 7 (494 aa).

Residue alanine 2 is modified to N-acetylalanine. 8 TPR repeats span residues 28 to 61, 62 to 95, 96 to 129, 142 to 175, 210 to 243, 256 to 289, 294 to 327, and 328 to 361; these read AESF…CPNN, ASYY…DDSF, VRGH…DHKN, VMEY…APAC, ADAL…APDH, LKAK…DPNN, AKLY…DDTY, and IKAY…EKTK. The 71-residue stretch at 381 to 451 folds into the J domain; sequence DYYKILGVDK…KKKTRYDSGQ (71 aa). Serine 393 bears the Phosphoserine mark.

As to quaternary structure, associates with complexes containing chaperones HSP70 and HSP90. Interacts with the GAP domain of NF1. Interacts with HSP90AA1. Interacts with HSPA1A/B; the interaction is enhanced by ATP. Interacts with HSP90AB1. Interacts with PGR. Interacts with RAD9A; the interaction is interrupted by UV and heat shock treatments. Interacts with HUS1 and RAD1. Interacts with NR1I3; this complex may also include HSP90 Interacts with HSPA8. Widely expressed with high levels in liver, skeletal muscle, kidney and testis.

It localises to the cytoplasm. Its subcellular location is the nucleus. It is found in the cytoskeleton. Acts as a co-chaperone regulating the molecular chaperones HSP70 and HSP90 in folding of steroid receptors, such as the glucocorticoid receptor and the progesterone receptor. Proposed to act as a recycling chaperone by facilitating the return of chaperone substrates to early stages of chaperoning if further folding is required. In vitro, induces ATP-independent dissociation of HSP90 but not of HSP70 from the chaperone-substrate complexes. Recruits NR1I3 to the cytoplasm. The sequence is that of DnaJ homolog subfamily C member 7 (Dnajc7) from Mus musculus (Mouse).